A 751-amino-acid polypeptide reads, in one-letter code: Dendritic arbor reduction protein 1 (751 aa).

A compositionally biased stretch (low complexity) spans 57–89 (NNNNTSSNNNHSSNSSSNNSNGSQTPNGNNNSS). Disordered regions lie at residues 57-167 (NNNN…PNSN), 248-275 (LMLSSSGSSNNNGSSNSSSNTGESATSQ), 304-351 (TEKQ…QQHL), 374-410 (LQQQHQQQQHLQHNNSSSSSPKLATPGDNSGNTSSYQ), 458-578 (SATA…AATG), and 594-639 (SAIQ…AAHI). The segment covering 95 to 125 (HQHHQFHHHLHHHHSHQHHHQHHHLHQHHSH) has biased composition (basic residues). Positions 153 to 167 (AQQQQLQPAGSPNSN) are enriched in polar residues. Composition is skewed to low complexity over residues 251-267 (SSSGSSNNNGSSNSSSN), 309-351 (RQQQ…QQHL), and 374-393 (LQQQHQQQQHLQHNNSSSSS). The span at 400 to 410 (GDNSGNTSSYQ) shows a compositional bias: polar residues. 3 stretches are compositionally biased toward low complexity: residues 458-513 (SATA…SSAS), 527-548 (DPGSPGSSMVAAAAAAAAQRRT), and 594-610 (SAIQQQQQQPQQQQVPQ). 3 consecutive C2H2-type zinc fingers follow at residues 664–688 (HHCDFVGCSKVYTKSSHLKAHQRIH), 694–718 (YTCQWPECEWRFARSDELTRHYRKH), and 724–746 (FKCIVCERSFARSDHLALHMKRH).

Belongs to the krueppel C2H2-type zinc-finger protein family. In terms of tissue distribution, highly enriched in the peripheral nervous system but is absent from the central nervous system. Expressed in neurons with more than one dendrite including da neurons, bd neurons and the dmd1 neuron but undetectable in neurons with single dendrites such as external sensory organ neurons and chodonotal neurons.

It localises to the nucleus. Its function is as follows. Transcriptional regulator which promotes dendrite growth by suppressing, either directly or indirectly, the expression of the microtubule-severing protein spas. Determines multipolar neuron morphology in postmitotic neurons by positively regulating the expression of genes involved in nuclear positioning including several dynein genes and the nuclear migration protein nudC. This is Dendritic arbor reduction protein 1 from Drosophila melanogaster (Fruit fly).